The following is a 637-amino-acid chain: Poly(A) polymerase beta (637 aa).

Low complexity predominate over residues 1-10 (MMPFPVTTQG). The disordered stretch occupies residues 1 to 23 (MMPFPVTTQGPPQPAPPPNRYGV). ATP-binding positions include 101–103 (FGS), threonine 110, 114–116 (DID), aspartate 168, lysine 229, tyrosine 238, and 247–248 (GV). Aspartate 114, aspartate 116, and aspartate 168 together coordinate Mg(2+). The disordered stretch occupies residues 535–555 (SVPSSTSTMKTGPLISSSQGR).

It belongs to the poly(A) polymerase family. As to quaternary structure, interacts with GSG1. The cofactor is Mg(2+). Mn(2+) serves as cofactor. Testis specific.

It localises to the nucleus. The catalysed reaction is RNA(n) + ATP = RNA(n)-3'-adenine ribonucleotide + diphosphate. The polypeptide is Poly(A) polymerase beta (Homo sapiens (Human)).